A 436-amino-acid polypeptide reads, in one-letter code: UPF0597 protein YhaM (436 aa).

It belongs to the UPF0597 family.

This Escherichia coli (strain SE11) protein is UPF0597 protein YhaM.